We begin with the raw amino-acid sequence, 215 residues long: Kunitz trypsin inhibitor 4 (215 aa).

A signal peptide spans 1-28; it reads MTKTTKTMNPKFYLVLALTAVLASNAYG. 2 cysteine pairs are disulfide-bonded: Cys-66–Cys-112 and Cys-165–Cys-176. N-linked (GlcNAc...) asparagine glycosylation is present at Asn-206.

This sequence belongs to the protease inhibitor I3 (leguminous Kunitz-type inhibitor) family. Expressed in roots.

It localises to the endoplasmic reticulum. Exhibits Kunitz trypsin protease inhibitor activity. Involved in modulating programmed cell death (PCD) in plant-pathogen interactions. Can inhibit both serine proteases and cysteine proteases. May be involved in the modulation of the proteases that participate in the hydrolysis of dietary proteins in the gut of spider mites. The chain is Kunitz trypsin inhibitor 4 from Arabidopsis thaliana (Mouse-ear cress).